Reading from the N-terminus, the 545-residue chain is Chaperonin GroEL (545 aa).

ATP is bound by residues 31–34 (TLGP), 88–92 (DGTTT), Gly415, 478–480 (NAA), and Asp494.

This sequence belongs to the chaperonin (HSP60) family. Forms a cylinder of 14 subunits composed of two heptameric rings stacked back-to-back. Interacts with the co-chaperonin GroES.

Its subcellular location is the cytoplasm. It carries out the reaction ATP + H2O + a folded polypeptide = ADP + phosphate + an unfolded polypeptide.. In terms of biological role, together with its co-chaperonin GroES, plays an essential role in assisting protein folding. The GroEL-GroES system forms a nano-cage that allows encapsulation of the non-native substrate proteins and provides a physical environment optimized to promote and accelerate protein folding. In Streptococcus pyogenes serotype M4 (strain MGAS10750), this protein is Chaperonin GroEL.